The primary structure comprises 539 residues: Protein ENTREP2 (539 aa).

4 helical membrane passes run 31-51 (IVLALGATQMALGCLIVAVSF), 65-85 (SCPFWAGFSVLLSGLIGVVSW), 89-109 (LSLVITFFMLLSAVCVMLNLA), and 176-196 (LLFSVCALNVLSTIVCALATA). The disordered stretch occupies residues 301–481 (VVGQPPASQV…TSKERPRSLV (181 aa)). A compositionally biased stretch (polar residues) spans 306–331 (PASQVTSIGQQVAESSSGDPNTSAGF). The segment covering 347-365 (GTATPGSSPSPDGPVGAPA) has biased composition (low complexity). The segment covering 395 to 408 (SRSTSDPTLCTSSM) has biased composition (polar residues).

This sequence belongs to the ENTREP family.

It is found in the membrane. The chain is Protein ENTREP2 from Homo sapiens (Human).